Here is a 389-residue protein sequence, read N- to C-terminus: Lipid-A-disaccharide synthase (389 aa).

The protein belongs to the LpxB family.

It carries out the reaction a lipid X + a UDP-2-N,3-O-bis[(3R)-3-hydroxyacyl]-alpha-D-glucosamine = a lipid A disaccharide + UDP + H(+). It participates in bacterial outer membrane biogenesis; LPS lipid A biosynthesis. Functionally, condensation of UDP-2,3-diacylglucosamine and 2,3-diacylglucosamine-1-phosphate to form lipid A disaccharide, a precursor of lipid A, a phosphorylated glycolipid that anchors the lipopolysaccharide to the outer membrane of the cell. The protein is Lipid-A-disaccharide synthase of Paraburkholderia xenovorans (strain LB400).